The sequence spans 1063 residues: Cellulose synthase A catalytic subunit 7 [UDP-forming] (1063 aa).

Over 1–213 (MDTASVTGGE…IPSSKINPYR (213 aa)) the chain is Cytoplasmic. Residues Cys18, Cys21, Cys37, Cys40, Cys45, Cys48, Cys60, and Cys63 each contribute to the Zn(2+) site. The segment at 18–64 (CRVCGEEVAAREDGKPFVACAECGFPVCKPCYEYERSEGTQCCPQCN) adopts an RING-type; degenerate zinc-finger fold. Residues 116–154 (NGEQPAQKWRPGGPALSSFTGSVAGKDLEQEREMEGGME) are disordered. A compositionally biased stretch (basic and acidic residues) spans 141-154 (KDLEQEREMEGGME). The chain crosses the membrane as a helical span at residues 214 to 234 (IVIVLRLVVLCFFLKFRITTP). At 235–237 (AMD) the chain is on the extracellular side. The helical transmembrane segment at 238-258 (AVPLWLASVICELWFALSWIL) threads the bilayer. Residues 259–845 (DQLPKWSPVT…TNTIVYPFTS (587 aa)) are Cytoplasmic-facing. UDP-alpha-D-glucose contacts are provided by Ser297, Lys303, Glu304, and Asp333. Residue Asp333 is part of the active site. Residues 387 to 414 (VKERRAMKREYEEFKVRINALVAKAQKK) are a coiled coil. UDP-alpha-D-glucose is bound at residue Lys474. Mn(2+) is bound by residues Lys475 and Asp499. Residue Asp762 is part of the active site. Residues 846–866 (IPLLAYCTIPAVCLLTGKFII) traverse the membrane as a helical segment. The Extracellular segment spans residues 867–871 (PTLNN). A helical transmembrane segment spans residues 872-892 (LASIWFIALFLSIIATGVLEL). Residues 893–907 (RWSGVSIEDWWRNEQ) are Cytoplasmic-facing. The helical transmembrane segment at 908-928 (FWVIGGVSAHLFAVFQGLLKV) threads the bilayer. At 929 to 959 (LGGVDTNFTVTSKAAADETDAFGELYLFKWT) the chain is on the extracellular side. The N-linked (GlcNAc...) asparagine glycan is linked to Asn935. A helical membrane pass occupies residues 960–980 (TLLVPPTTLIIINMVGIVAGV). Residues 981–991 (SDAVNNGYGSW) lie on the Cytoplasmic side of the membrane. The helical transmembrane segment at 992–1012 (GPLFGKLFFSFWVILHLYPFL) threads the bilayer. At 1013–1021 (KGLMGRQNR) the chain is on the extracellular side. Residues 1022–1042 (TPTIVVLWSILLASIFSLVWV) form a helical membrane-spanning segment. At 1043 to 1063 (RIDPFIPKPKGPVLKPCGVSC) the chain is on the cytoplasmic side.

The protein belongs to the glycosyltransferase 2 family. Plant cellulose synthase subfamily. It depends on Mn(2+) as a cofactor. Requires Zn(2+) as cofactor.

The protein resides in the cell membrane. It catalyses the reaction [(1-&gt;4)-beta-D-glucosyl](n) + UDP-alpha-D-glucose = [(1-&gt;4)-beta-D-glucosyl](n+1) + UDP + H(+). Its pathway is glycan metabolism; plant cellulose biosynthesis. Its function is as follows. Catalytic subunit of cellulose synthase terminal complexes ('rosettes'), required for beta-1,4-glucan microfibril crystallization, a major mechanism of the cell wall formation. Involved in the secondary cell wall formation. The protein is Cellulose synthase A catalytic subunit 7 [UDP-forming] (CESA7) of Oryza sativa subsp. japonica (Rice).